The sequence spans 294 residues: 33 kDa chaperonin (294 aa).

Cystine bridges form between C238–C240 and C271–C274.

The protein belongs to the HSP33 family. Under oxidizing conditions two disulfide bonds are formed involving the reactive cysteines. Under reducing conditions zinc is bound to the reactive cysteines and the protein is inactive.

It localises to the cytoplasm. Redox regulated molecular chaperone. Protects both thermally unfolding and oxidatively damaged proteins from irreversible aggregation. Plays an important role in the bacterial defense system toward oxidative stress. This Staphylococcus carnosus (strain TM300) protein is 33 kDa chaperonin.